Consider the following 2135-residue polypeptide: Plexin-B1 (2135 aa).

Positions 1–19 are cleaved as a signal peptide; the sequence is MPALGPALLQALWAGWVLT. One can recognise a Sema domain in the interval 20 to 479; the sequence is LQPLPPTAFT…TQSTLLKVPV (460 aa). Topologically, residues 20-1490 are extracellular; sequence LQPLPPTAFT…SPGAFPVAAQ (1471 aa). Residue Asn31 is glycosylated (N-linked (GlcNAc...) asparagine). 9 cysteine pairs are disulfide-bonded: Cys79-Cys88, Cys111-Cys119, Cys252-Cys377, Cys268-Cys322, Cys340-Cys364, Cys482-Cys499, Cys488-Cys533, Cys491-Cys508, and Cys502-Cys514. N-linked (GlcNAc...) asparagine glycosylation occurs at Asn334. Asn543 carries an N-linked (GlcNAc...) asparagine glycan. Cysteines 570 and 588 form a disulfide. Disordered regions lie at residues 671 to 829 and 849 to 884; these read MVAS…TTFP and LPEADEWTGGDAPAFSTSTLLSGDGDSAELEGPPAP. Pro residues predominate over residues 681 to 697; that stretch reads SPDPPARGGPSPSPPTA. Composition is skewed to low complexity over residues 698 to 710 and 734 to 754; these read PKALATPAPDTLP and SPWGPWAGSGSISSPGSTGSP. 3 IPT/TIG domains span residues 1070 to 1160, 1162 to 1249, and 1252 to 1375; these read PLIH…FAYQ, PKVH…FKYT, and PNIT…FSYE. Asn1183, Asn1253, and Asn1330 each carry an N-linked (GlcNAc...) asparagine glycan. Residues 1491 to 1511 traverse the membrane as a helical segment; it reads VGLGVGTSLLALGVIIIVLMY. The stretch at 1507-1539 forms a coiled coil; that stretch reads IVLMYRRKSKQALRDYKKVQIQLENLESSVRDR. Topologically, residues 1512–2135 are cytoplasmic; it reads RRKSKQALRD…AAVENKVTDL (624 aa). The tract at residues 1883–1908 is disordered; sequence PWHLVKPSDEPEPPRPRRGSLRGGER. A compositionally biased stretch (basic and acidic residues) spans 1888-1897; the sequence is KPSDEPEPPR.

Belongs to the plexin family. In terms of assembly, monomer, and heterodimer with PLXNB2 after proteolytic processing. Binds RAC1 that has been activated by GTP binding. Interaction with SEMA4D promotes binding of cytoplasmic ligands. Interacts with PLXNA1. Interacts with ARHGEF11 and ARHGEF12. Interacts with ERBB2. Interacts with MET. Interacts with MST1R. Interacts with RRAS. Interacts with RHOD. Interacts with RND1. Interacts with NRP1 and NRP2. Post-translationally, phosphorylated on tyrosine residues by ERBB2 and MET upon SEMA4D binding. In terms of processing, proteolytic processing favors heterodimerization with PLXNB2 and SEMA4D binding. As to expression, highly expressed in fetal kidney, and at slightly lower levels in fetal brain, lung and liver.

The protein resides in the cell membrane. Its subcellular location is the secreted. Receptor for SEMA4D. Plays a role in GABAergic synapse development. Mediates SEMA4A- and SEMA4D-dependent inhibitory synapse development. Plays a role in RHOA activation and subsequent changes of the actin cytoskeleton. Plays a role in axon guidance, invasive growth and cell migration. In Homo sapiens (Human), this protein is Plexin-B1 (PLXNB1).